The chain runs to 234 residues: Proteasome subunit alpha type-2 (234 aa).

Ala-2 carries the post-translational modification N-acetylalanine. Tyr-121 carries the post-translational modification Phosphotyrosine.

The protein belongs to the peptidase T1A family. The 26S proteasome consists of a 20S proteasome core and two 19S regulatory subunits. The 20S proteasome core is a barrel-shaped complex made of 28 subunits that are arranged in four stacked rings. The two outer rings are each formed by seven alpha subunits, and the two inner rings are formed by seven beta subunits. The proteolytic activity is exerted by three beta-subunits PSMB5, PSMB6 and PSMB7.

The protein localises to the cytoplasm. Its subcellular location is the nucleus. Functionally, component of the 20S core proteasome complex involved in the proteolytic degradation of most intracellular proteins. This complex plays numerous essential roles within the cell by associating with different regulatory particles. Associated with two 19S regulatory particles, forms the 26S proteasome and thus participates in the ATP-dependent degradation of ubiquitinated proteins. The 26S proteasome plays a key role in the maintenance of protein homeostasis by removing misfolded or damaged proteins that could impair cellular functions, and by removing proteins whose functions are no longer required. Associated with the PA200 or PA28, the 20S proteasome mediates ubiquitin-independent protein degradation. This type of proteolysis is required in several pathways including spermatogenesis (20S-PA200 complex) or generation of a subset of MHC class I-presented antigenic peptides (20S-PA28 complex). In Xenopus laevis (African clawed frog), this protein is Proteasome subunit alpha type-2 (psma2).